Consider the following 90-residue polypeptide: MAVKIRLKRMGAKKSPFYRIVVADSRSPRDGRFIETIGTYNPLTEPAEIKINEELALKWLQNGAKPSDTVRNLLSKQGILEKFHNLKYGK.

It belongs to the bacterial ribosomal protein bS16 family.

In Anoxybacillus flavithermus (strain DSM 21510 / WK1), this protein is Small ribosomal subunit protein bS16.